We begin with the raw amino-acid sequence, 187 residues long: Benzene 1,2-dioxygenase subunit beta (187 aa).

Belongs to the bacterial ring-hydroxylating dioxygenase beta subunit family. In terms of assembly, this dioxygenase system consists of four proteins: the two subunits of the hydroxylase component (BnzA and BnzB), a ferredoxin (BnzC) and a ferredoxin reductase (BnzD). The cofactor is [2Fe-2S] cluster. Requires Fe cation as cofactor.

The enzyme catalyses benzene + NADH + O2 + H(+) = cis-1,2-dihydrobenzene-1,2-diol + NAD(+). It carries out the reaction toluene + NADH + O2 + H(+) = (1S,2R)-3-methylcyclohexa-3,5-diene-1,2-diol + NAD(+). The protein operates within aromatic compound metabolism; benzene degradation; catechol from benzene: step 1/2. It functions in the pathway xenobiotic degradation; toluene degradation. It participates in xenobiotic degradation; xylene degradation. Catalyzes both the oxidation of benzene and toluene. The beta subunit may be responsible for the substrate specificity of the enzyme. This chain is Benzene 1,2-dioxygenase subunit beta (bnzB), found in Pseudomonas putida (strain ATCC 700007 / DSM 6899 / JCM 31910 / BCRC 17059 / LMG 24140 / F1).